Here is a 239-residue protein sequence, read N- to C-terminus: Uridylate kinase (239 aa).

10-13 (KLSG) is a binding site for ATP. Gly-53 is a UMP binding site. Positions 54 and 58 each coordinate ATP. UMP is bound by residues Asp-73 and 135-142 (TGRPYFTT). Positions 163, 169, and 172 each coordinate ATP.

It belongs to the UMP kinase family. Homohexamer.

It localises to the cytoplasm. It catalyses the reaction UMP + ATP = UDP + ADP. The protein operates within pyrimidine metabolism; CTP biosynthesis via de novo pathway; UDP from UMP (UMPK route): step 1/1. Inhibited by UTP. Its function is as follows. Catalyzes the reversible phosphorylation of UMP to UDP. The polypeptide is Uridylate kinase (Mycoplasmopsis synoviae (strain 53) (Mycoplasma synoviae)).